A 79-amino-acid polypeptide reads, in one-letter code: Small ribosomal subunit protein bS18 (79 aa).

The protein belongs to the bacterial ribosomal protein bS18 family. As to quaternary structure, part of the 30S ribosomal subunit. Forms a tight heterodimer with protein bS6.

Functionally, binds as a heterodimer with protein bS6 to the central domain of the 16S rRNA, where it helps stabilize the platform of the 30S subunit. The chain is Small ribosomal subunit protein bS18 from Listeria innocua serovar 6a (strain ATCC BAA-680 / CLIP 11262).